The following is a 183-amino-acid chain: NEDD8-conjugating enzyme Ubc12 (183 aa).

At Met-1 the chain carries N-acetylmethionine. The disordered stretch occupies residues 1 to 28; the sequence is MIKLFSLKQQKKEEESAGGTKGSSKKAS. One can recognise a UBC core domain in the interval 29 to 173; it reads AAQLRIQKDI…VQRSMRGGYI (145 aa). Residue Cys-111 is the Glycyl thioester intermediate of the active site.

This sequence belongs to the ubiquitin-conjugating enzyme family. UBC12 subfamily. Post-translationally, the acetylation of Met-1 increases affinity for DCUN1D1 by about 2 orders of magnitude and is crucial for NEDD8 transfer to cullins.

It catalyses the reaction [E1 NEDD8-activating enzyme]-S-[NEDD8 protein]-yl-L-cysteine + [E2 NEDD8-conjugating enzyme]-L-cysteine = [E1 NEDD8-activating enzyme]-L-cysteine + [E2 NEDD8-conjugating enzyme]-S-[NEDD8-protein]-yl-L-cysteine.. Its pathway is protein modification; protein neddylation. Accepts the ubiquitin-like protein NEDD8 from the UBA3-NAE1 E1 complex and catalyzes its covalent attachment to other proteins. The specific interaction with the E3 ubiquitin ligase rbx1, but not rbx2, suggests that the rbx1-ube2m complex neddylates specific target proteins, such as cul1, cul2, cul3 and cul4. Involved in cell proliferation. The sequence is that of NEDD8-conjugating enzyme Ubc12 (ube2m) from Xenopus tropicalis (Western clawed frog).